Here is a 240-residue protein sequence, read N- to C-terminus: tRNA (guanine-N(7)-)-methyltransferase (240 aa).

A disordered region spans residues 1–20 (MTESHDTPITPDGEARPHRR). 4 residues coordinate S-adenosyl-L-methionine: glutamate 70, glutamate 95, aspartate 122, and aspartate 145. Residue aspartate 145 is part of the active site. Substrate is bound by residues lysine 149, aspartate 181, and 218 to 221 (TKFE).

This sequence belongs to the class I-like SAM-binding methyltransferase superfamily. TrmB family.

The catalysed reaction is guanosine(46) in tRNA + S-adenosyl-L-methionine = N(7)-methylguanosine(46) in tRNA + S-adenosyl-L-homocysteine. The protein operates within tRNA modification; N(7)-methylguanine-tRNA biosynthesis. In terms of biological role, catalyzes the formation of N(7)-methylguanine at position 46 (m7G46) in tRNA. The protein is tRNA (guanine-N(7)-)-methyltransferase of Pseudomonas putida (strain ATCC 47054 / DSM 6125 / CFBP 8728 / NCIMB 11950 / KT2440).